A 170-amino-acid polypeptide reads, in one-letter code: NADH-quinone oxidoreductase subunit B (170 aa).

4 residues coordinate [4Fe-4S] cluster: Cys37, Cys38, Cys102, and Cys131.

The protein belongs to the complex I 20 kDa subunit family. In terms of assembly, NDH-1 is composed of 14 different subunits. Subunits NuoB, C, D, E, F, and G constitute the peripheral sector of the complex. Requires [4Fe-4S] cluster as cofactor.

The protein resides in the cell inner membrane. The catalysed reaction is a quinone + NADH + 5 H(+)(in) = a quinol + NAD(+) + 4 H(+)(out). In terms of biological role, NDH-1 shuttles electrons from NADH, via FMN and iron-sulfur (Fe-S) centers, to quinones in the respiratory chain. The immediate electron acceptor for the enzyme in this species is believed to be ubiquinone. Couples the redox reaction to proton translocation (for every two electrons transferred, four hydrogen ions are translocated across the cytoplasmic membrane), and thus conserves the redox energy in a proton gradient. The sequence is that of NADH-quinone oxidoreductase subunit B from Geobacter metallireducens (strain ATCC 53774 / DSM 7210 / GS-15).